We begin with the raw amino-acid sequence, 1934 residues long: Myosin-7 (1934 aa).

The region spanning 31 to 80 is the Myosin N-terminal SH3-like domain; sequence DLKKDVFVPDDKEEFVKAKIVSREGGKVTAETENGKTVTVKEDQVMQQNP. The Myosin motor domain maps to 84-777; that stretch reads DKIEDMAMLT…LLGLLEEMRD (694 aa). Lys-128 bears the N6,N6,N6-trimethyllysine mark. 177-184 provides a ligand contact to ATP; the sequence is GESGAGKT. The residue at position 377 (Thr-377) is a Phosphothreonine. Actin-binding stretches follow at residues 654 to 676 and 756 to 770; these read LNKLMTNLRSTHPHFVRCIIPNE and KFGHTKVFFKAGLLG. The IQ domain occupies 780–809; it reads LSRIITRIQAQSRGLLSRMEFKKLLERRDS. A coiled-coil region spans residues 839–1934; that stretch reads LKSAETEKEM…DIGAKGLNEE (1096 aa). Ser-1136 and Ser-1268 each carry phosphoserine. At Thr-1281 the chain carries Phosphothreonine. Position 1307 is a phosphotyrosine (Tyr-1307). Thr-1308 bears the Phosphothreonine mark. Ser-1509 bears the Phosphoserine mark. The residue at position 1512 (Thr-1512) is a Phosphothreonine. Residues 1914–1934 are disordered; that stretch reads SQVNKLRAKSRDIGAKGLNEE. Residues 1922–1934 show a composition bias toward basic and acidic residues; that stretch reads KSRDIGAKGLNEE.

Belongs to the TRAFAC class myosin-kinesin ATPase superfamily. Myosin family. In terms of assembly, muscle myosin is a hexameric protein that consists of 2 heavy chain subunits (MHC), 2 alkali light chain subunits (MLC) and 2 regulatory light chain subunits (MLC-2). Interacts with ECPAS. Interacts (via C-terminus) with LRRC39.

Its subcellular location is the cytoplasm. It is found in the myofibril. The protein localises to the sarcomere. In terms of biological role, myosins are actin-based motor molecules with ATPase activity essential for muscle contraction. Forms regular bipolar thick filaments that, together with actin thin filaments, constitute the fundamental contractile unit of skeletal and cardiac muscle. This Mesocricetus auratus (Golden hamster) protein is Myosin-7 (MYH7).